The chain runs to 841 residues: Translation initiation factor IF-2 (841 aa).

The interval 94-255 (QRSPEEIEAE…RNAHGFQSPT (162 aa)) is disordered. A compositionally biased stretch (basic and acidic residues) spans 96-135 (SPEEIEAERKREMDERRAVENAARQKAEEEAKRRAEEDAR). Positions 136-175 (NQPAAGQPASAPAQPVAAAEPVREAPAAAAPAPASAAPSA) are enriched in low complexity. Basic and acidic residues-rich tracts occupy residues 176–217 (DARK…EKAP) and 225–234 (TTDEESDSFR). Residues 235 to 248 (RGGRGKGKLKKRNA) are compositionally biased toward basic residues. One can recognise a tr-type G domain in the interval 341–510 (SRAPVVTVMG…LLQAEVLELK (170 aa)). Residues 350 to 357 (GHVDHGKT) are G1. 350–357 (GHVDHGKT) is a GTP binding site. The G2 stretch occupies residues 375–379 (GITQH). Positions 396–399 (DTPG) are G3. Residues 396-400 (DTPGH) and 450-453 (NKID) each bind GTP. The tract at residues 450–453 (NKID) is G4. The tract at residues 486–488 (SAK) is G5.

The protein belongs to the TRAFAC class translation factor GTPase superfamily. Classic translation factor GTPase family. IF-2 subfamily.

Its subcellular location is the cytoplasm. Its function is as follows. One of the essential components for the initiation of protein synthesis. Protects formylmethionyl-tRNA from spontaneous hydrolysis and promotes its binding to the 30S ribosomal subunits. Also involved in the hydrolysis of GTP during the formation of the 70S ribosomal complex. The chain is Translation initiation factor IF-2 from Pseudomonas syringae pv. tomato (strain ATCC BAA-871 / DC3000).